Reading from the N-terminus, the 563-residue chain is Arginine--tRNA ligase (563 aa).

Positions 120-130 match the 'HIGH' region motif; sequence PNIAKPFHIGH.

It belongs to the class-I aminoacyl-tRNA synthetase family. As to quaternary structure, monomer.

It localises to the cytoplasm. The catalysed reaction is tRNA(Arg) + L-arginine + ATP = L-arginyl-tRNA(Arg) + AMP + diphosphate. The polypeptide is Arginine--tRNA ligase (Clostridium botulinum (strain ATCC 19397 / Type A)).